Consider the following 355-residue polypeptide: Erythronate-4-phosphate dehydrogenase (355 aa).

S45 and T66 together coordinate substrate. D146 is an NAD(+) binding site. Residue R206 is part of the active site. D229 is an NAD(+) binding site. E234 is a catalytic residue. H251 acts as the Proton donor in catalysis. Residue G254 participates in NAD(+) binding. Y255 lines the substrate pocket.

Belongs to the D-isomer specific 2-hydroxyacid dehydrogenase family. PdxB subfamily. Homodimer.

It is found in the cytoplasm. It catalyses the reaction 4-phospho-D-erythronate + NAD(+) = (R)-3-hydroxy-2-oxo-4-phosphooxybutanoate + NADH + H(+). Its pathway is cofactor biosynthesis; pyridoxine 5'-phosphate biosynthesis; pyridoxine 5'-phosphate from D-erythrose 4-phosphate: step 2/5. Catalyzes the oxidation of erythronate-4-phosphate to 3-hydroxy-2-oxo-4-phosphonooxybutanoate. The sequence is that of Erythronate-4-phosphate dehydrogenase from Acinetobacter baylyi (strain ATCC 33305 / BD413 / ADP1).